The primary structure comprises 1198 residues: Integrator complex subunit 2 (1198 aa).

The chain crosses the membrane as a helical span at residues 421–437; it reads FVSLSFCMLLAFSTLVS.

This sequence belongs to the Integrator subunit 2 family. Component of the Integrator complex, composed of core subunits INTS1, INTS2, INTS3, INTS4, INTS5, INTS6, INTS7, INTS8, INTS9/RC74, INTS10, INTS11/CPSF3L, INTS12, INTS13, INTS14 and INTS15. The core complex associates with protein phosphatase 2A subunits PPP2CA and PPP2R1A, to form the Integrator-PP2A (INTAC) complex.

Its subcellular location is the nucleus. It localises to the nucleus membrane. The protein localises to the cytoplasm. Functionally, component of the integrator complex, a multiprotein complex that terminates RNA polymerase II (Pol II) transcription in the promoter-proximal region of genes. The integrator complex provides a quality checkpoint during transcription elongation by driving premature transcription termination of transcripts that are unfavorably configured for transcriptional elongation: the complex terminates transcription by (1) catalyzing dephosphorylation of the C-terminal domain (CTD) of Pol II subunit POLR2A/RPB1 and SUPT5H/SPT5, (2) degrading the exiting nascent RNA transcript via endonuclease activity and (3) promoting the release of Pol II from bound DNA. The integrator complex is also involved in terminating the synthesis of non-coding Pol II transcripts, such as enhancer RNAs (eRNAs), small nuclear RNAs (snRNAs), telomerase RNAs and long non-coding RNAs (lncRNAs). Mediates recruitment of cytoplasmic dynein to the nuclear envelope, probably as component of the integrator complex. This chain is Integrator complex subunit 2 (Ints2), found in Mus musculus (Mouse).